The chain runs to 362 residues: Phosphoserine aminotransferase (362 aa).

Arg-42 lines the L-glutamate pocket. Residues 76 to 77 (AR), Trp-102, Thr-153, Asp-174, and Gln-197 each bind pyridoxal 5'-phosphate. N6-(pyridoxal phosphate)lysine is present on Lys-198. 239–240 (NT) is a pyridoxal 5'-phosphate binding site.

It belongs to the class-V pyridoxal-phosphate-dependent aminotransferase family. SerC subfamily. In terms of assembly, homodimer. The cofactor is pyridoxal 5'-phosphate.

Its subcellular location is the cytoplasm. It catalyses the reaction O-phospho-L-serine + 2-oxoglutarate = 3-phosphooxypyruvate + L-glutamate. The enzyme catalyses 4-(phosphooxy)-L-threonine + 2-oxoglutarate = (R)-3-hydroxy-2-oxo-4-phosphooxybutanoate + L-glutamate. The protein operates within amino-acid biosynthesis; L-serine biosynthesis; L-serine from 3-phospho-D-glycerate: step 2/3. It participates in cofactor biosynthesis; pyridoxine 5'-phosphate biosynthesis; pyridoxine 5'-phosphate from D-erythrose 4-phosphate: step 3/5. In terms of biological role, catalyzes the reversible conversion of 3-phosphohydroxypyruvate to phosphoserine and of 3-hydroxy-2-oxo-4-phosphonooxybutanoate to phosphohydroxythreonine. This is Phosphoserine aminotransferase from Proteus mirabilis (strain HI4320).